Here is a 420-residue protein sequence, read N- to C-terminus: UDP-N-acetylglucosamine 1-carboxyvinyltransferase 1 (420 aa).

22–23 (KN) serves as a coordination point for phosphoenolpyruvate. UDP-N-acetyl-alpha-D-glucosamine is bound at residue Arg91. Cys115 functions as the Proton donor in the catalytic mechanism. At Cys115 the chain carries 2-(S-cysteinyl)pyruvic acid O-phosphothioketal. Residues 120 to 124 (RPMDL), Asp303, and Val325 contribute to the UDP-N-acetyl-alpha-D-glucosamine site.

It belongs to the EPSP synthase family. MurA subfamily.

It is found in the cytoplasm. It catalyses the reaction phosphoenolpyruvate + UDP-N-acetyl-alpha-D-glucosamine = UDP-N-acetyl-3-O-(1-carboxyvinyl)-alpha-D-glucosamine + phosphate. The protein operates within cell wall biogenesis; peptidoglycan biosynthesis. In terms of biological role, cell wall formation. Adds enolpyruvyl to UDP-N-acetylglucosamine. The sequence is that of UDP-N-acetylglucosamine 1-carboxyvinyltransferase 1 from Carboxydothermus hydrogenoformans (strain ATCC BAA-161 / DSM 6008 / Z-2901).